A 214-amino-acid polypeptide reads, in one-letter code: Small ribosomal subunit protein uS3c (214 aa).

In terms of domain architecture, KH type-2 spans Ile39–Glu111.

It belongs to the universal ribosomal protein uS3 family. Part of the 30S ribosomal subunit.

The protein resides in the plastid. The protein localises to the chloroplast. The protein is Small ribosomal subunit protein uS3c (rps3) of Trieres chinensis (Marine centric diatom).